Reading from the N-terminus, the 494-residue chain is Cobyric acid synthase (494 aa).

The 195-residue stretch at 249–443 (EINVTILRLP…LHGIFDNGAW (195 aa)) folds into the GATase cobBQ-type domain. Cys330 (nucleophile) is an active-site residue. His435 is an active-site residue.

This sequence belongs to the CobB/CobQ family. CobQ subfamily.

The protein operates within cofactor biosynthesis; adenosylcobalamin biosynthesis. Functionally, catalyzes amidations at positions B, D, E, and G on adenosylcobyrinic A,C-diamide. NH(2) groups are provided by glutamine, and one molecule of ATP is hydrogenolyzed for each amidation. In Crocosphaera subtropica (strain ATCC 51142 / BH68) (Cyanothece sp. (strain ATCC 51142)), this protein is Cobyric acid synthase.